Here is a 103-residue protein sequence, read N- to C-terminus: Large ribosomal subunit protein bL21 (103 aa).

The protein belongs to the bacterial ribosomal protein bL21 family. As to quaternary structure, part of the 50S ribosomal subunit. Contacts protein L20.

This protein binds to 23S rRNA in the presence of protein L20. This is Large ribosomal subunit protein bL21 from Verminephrobacter eiseniae (strain EF01-2).